Reading from the N-terminus, the 72-residue chain is UPF0346 protein GK1571 (72 aa).

The protein belongs to the UPF0346 family.

The polypeptide is UPF0346 protein GK1571 (Geobacillus kaustophilus (strain HTA426)).